Reading from the N-terminus, the 223-residue chain is MSASYGRIIKDGLWENNGVLCMLLGMCPTMAMTGTATNGLGMGLATAAVMAASNLMVAMFRNYVTHEVRIPVYILIVAANVTFVDLGMNAWMHELYKVLGLFIPLIVSNCLPLARLEAFAAKEPVLPSFLDGLFMGLGFTLALTAIGAVREMIGQGTLFADAALLLGPWAKLLELRVMPADWGILVLILPPGGFLIAGLMVVAKRLVDLAGGKEIKMAGAHSV.

Helical transmembrane passes span 17-37 (NGVL…GTAT), 40-60 (LGMG…VAMF), 70-90 (IPVY…GMNA), 94-114 (ELYK…LPLA), 129-149 (FLDG…IGAV), and 182-202 (WGIL…LMVV).

Belongs to the NqrDE/RnfAE family. As to quaternary structure, the complex is composed of six subunits: RnfA, RnfB, RnfC, RnfD, RnfE and RnfG.

Its subcellular location is the cell inner membrane. Functionally, part of a membrane-bound complex that couples electron transfer with translocation of ions across the membrane. In Paramagnetospirillum magneticum (strain ATCC 700264 / AMB-1) (Magnetospirillum magneticum), this protein is Ion-translocating oxidoreductase complex subunit E.